The primary structure comprises 115 residues: Ribonuclease P protein component (115 aa).

Belongs to the RnpA family. As to quaternary structure, consists of a catalytic RNA component (M1 or rnpB) and a protein subunit.

The catalysed reaction is Endonucleolytic cleavage of RNA, removing 5'-extranucleotides from tRNA precursor.. Its function is as follows. RNaseP catalyzes the removal of the 5'-leader sequence from pre-tRNA to produce the mature 5'-terminus. It can also cleave other RNA substrates such as 4.5S RNA. The protein component plays an auxiliary but essential role in vivo by binding to the 5'-leader sequence and broadening the substrate specificity of the ribozyme. The chain is Ribonuclease P protein component from Natranaerobius thermophilus (strain ATCC BAA-1301 / DSM 18059 / JW/NM-WN-LF).